The following is a 436-amino-acid chain: 3-ketoacyl-CoA thiolase (436 aa).

The active-site Acyl-thioester intermediate is cysteine 99. Active-site proton acceptor residues include histidine 392 and cysteine 422.

The protein belongs to the thiolase-like superfamily. Thiolase family. As to quaternary structure, heterotetramer of two alpha chains (FadJ) and two beta chains (FadI).

It localises to the cytoplasm. It carries out the reaction an acyl-CoA + acetyl-CoA = a 3-oxoacyl-CoA + CoA. The protein operates within lipid metabolism; fatty acid beta-oxidation. Its function is as follows. Catalyzes the final step of fatty acid oxidation in which acetyl-CoA is released and the CoA ester of a fatty acid two carbons shorter is formed. This is 3-ketoacyl-CoA thiolase from Pseudoalteromonas atlantica (strain T6c / ATCC BAA-1087).